The chain runs to 325 residues: Mitochondrial thiamine pyrophosphate carrier 1 (325 aa).

Solcar repeat units follow at residues 12–111, 122–209, and 216–312; these read GSRL…TTLL, PPSA…LRPH, and PFSS…ALKF. Transmembrane regions (helical) follow at residues 17-35, 92-108, 127-143, 184-200, 223-239, and 287-304; these read VTAAGATAGLVARFVIAPL, LLYVCYSAIQFTTYRTT, SFVAGAIGGGTATAATY, VWDRAWAQIIPYMSFFF, VARTMASVMAKSRTFPL, and GLTVSLLKAAPASAVTMW.

This sequence belongs to the mitochondrial carrier (TC 2.A.29) family.

It localises to the mitochondrion inner membrane. Its function is as follows. Mitochondrial transporter that mediates uptake of thiamine pyrophosphate (ThPP) into mitochondria. The chain is Mitochondrial thiamine pyrophosphate carrier 1 (TPC1) from Chaetomium globosum (strain ATCC 6205 / CBS 148.51 / DSM 1962 / NBRC 6347 / NRRL 1970) (Soil fungus).